The chain runs to 312 residues: Olfactory receptor 1D5 (312 aa).

Residues 1-25 (MDGDNQSENSQFLLLGISESPEQQR) are Extracellular-facing. The N-linked (GlcNAc...) asparagine glycan is linked to N5. A helical transmembrane segment spans residues 26–49 (ILFWMFLSMYLVTVLGNVLIILAI). At 50 to 57 (SSDSHLHT) the chain is on the cytoplasmic side. The chain crosses the membrane as a helical span at residues 58 to 79 (PMYFFLANLSFTDLFFVTNTIP). The Extracellular segment spans residues 80-100 (KMLVNFQSQNKAISYAGCLTQ). C97 and C189 are oxidised to a cystine. The helical transmembrane segment at 101 to 120 (LYFLVSLVTLDNLILAVMAY) threads the bilayer. The Cytoplasmic portion of the chain corresponds to 121–140 (DRYVATCCPLHYVTAMSPGL). Residues 141-158 (CVLLLSLCWGLSVLYGLL) traverse the membrane as a helical segment. Residues 159–196 (LTFLLTRVTFCGPREIHYLFCDMYILLWLACSNTHIIH) are Extracellular-facing. A helical membrane pass occupies residues 197–220 (TALIATGCFIFLTPLGFMTTSYVR). Residues 221-237 (IVRTILQMPSASKKYKT) lie on the Cytoplasmic side of the membrane. The helical transmembrane segment at 238–260 (FSTCASHLGVVSLFYGTLAMVYL) threads the bilayer. The Extracellular portion of the chain corresponds to 261-271 (QPLHTYSMKDS). A helical membrane pass occupies residues 272-291 (VATVMYAVLTPMMNPFIYRL). Residues 292–312 (RNKDMHGAPGRVLWRPFQRPK) lie on the Cytoplasmic side of the membrane.

Belongs to the G-protein coupled receptor 1 family.

The protein localises to the cell membrane. In terms of biological role, odorant receptor. In Homo sapiens (Human), this protein is Olfactory receptor 1D5 (OR1D5).